The chain runs to 394 residues: Phosphopentomutase (394 aa).

Mn(2+) is bound by residues Asp13, Asp286, His291, Asp327, His328, and His339.

This sequence belongs to the phosphopentomutase family. Mn(2+) is required as a cofactor.

It localises to the cytoplasm. It carries out the reaction 2-deoxy-alpha-D-ribose 1-phosphate = 2-deoxy-D-ribose 5-phosphate. The catalysed reaction is alpha-D-ribose 1-phosphate = D-ribose 5-phosphate. The protein operates within carbohydrate degradation; 2-deoxy-D-ribose 1-phosphate degradation; D-glyceraldehyde 3-phosphate and acetaldehyde from 2-deoxy-alpha-D-ribose 1-phosphate: step 1/2. Functionally, isomerase that catalyzes the conversion of deoxy-ribose 1-phosphate (dRib-1-P) and ribose 1-phosphate (Rib-1-P) to deoxy-ribose 5-phosphate (dRib-5-P) and ribose 5-phosphate (Rib-5-P), respectively. This Bacillus cereus (strain B4264) protein is Phosphopentomutase.